Here is a 238-residue protein sequence, read N- to C-terminus: Purine nucleoside phosphorylase DeoD-type (238 aa).

Histidine 5 serves as a coordination point for a purine D-ribonucleoside. Residues glycine 21, arginine 25, arginine 44, and arginine 88–serine 91 contribute to the phosphate site. Residues glutamate 180–glutamate 182 and serine 204–aspartate 205 each bind a purine D-ribonucleoside. Aspartate 205 functions as the Proton donor in the catalytic mechanism.

This sequence belongs to the PNP/UDP phosphorylase family. Homohexamer; trimer of homodimers.

It catalyses the reaction a purine D-ribonucleoside + phosphate = a purine nucleobase + alpha-D-ribose 1-phosphate. The enzyme catalyses a purine 2'-deoxy-D-ribonucleoside + phosphate = a purine nucleobase + 2-deoxy-alpha-D-ribose 1-phosphate. Catalyzes the reversible phosphorolytic breakdown of the N-glycosidic bond in the beta-(deoxy)ribonucleoside molecules, with the formation of the corresponding free purine bases and pentose-1-phosphate. The chain is Purine nucleoside phosphorylase DeoD-type from Photorhabdus laumondii subsp. laumondii (strain DSM 15139 / CIP 105565 / TT01) (Photorhabdus luminescens subsp. laumondii).